Consider the following 1051-residue polypeptide: Leucine zipper protein 1 (1051 aa).

A2 carries the N-acetylalanine modification. Residues 11-354 (ASNRHLRFKL…KLQVKKQKEL (344 aa)) are a coiled coil. Disordered stretches follow at residues 247 to 293 (ISST…KDLN), 374 to 401 (RTKL…HKRE), 432 to 554 (AAKA…SQVT), and 569 to 601 (ASSQ…SKAP). Positions 254 to 293 (KESRRKGSLDYLKQVENETRDKSENEKNRNQEDNKVKDLN) are enriched in basic and acidic residues. A phosphoserine mark is found at S256, S261, S395, S513, S571, S575, S612, and S660. Positions 569–578 (ASSQRASSEG) are enriched in polar residues. Positions 675-727 (VNTTITPEPEPKLQPNSREKVKSRGGTRTPLFENDKNAAVENDSAKSMRSSSN) are disordered. T680 carries the post-translational modification Phosphothreonine. At S691 the chain carries Phosphoserine. The segment covering 707–720 (ENDKNAAVENDSAK) has biased composition (basic and acidic residues). S746 carries the phosphoserine modification. The segment covering 789–799 (VTSKVTSSITI) has biased composition (low complexity). Residues 789–837 (VTSKVTSSITIYPSDSSGPRAVPTEAPRERHTSTSNIQVGPPELTSVSN) form a disordered region. A required for interaction with FLNA region spans residues 834–884 (SVSNHISSPLELSIHKHDITLQLTEAERVGDGSPKNRAETVVSRSSILIKP). S906 carries the post-translational modification Phosphoserine. The segment covering 929–938 (RDLKCSEDPP) has biased composition (basic and acidic residues). Positions 929 to 1000 (RDLKCSEDPP…TQSSLTASEV (72 aa)) are disordered. Polar residues-rich tracts occupy residues 946 to 958 (EATN…SSTD) and 989 to 999 (RRTQSSLTASE). T957 is modified (phosphothreonine). S993 carries the phosphoserine modification.

As to quaternary structure, component of the CERF-1 ISWI chromatin remodeling complex (also called the CECR2-containing remodeling factor (CERF) complex) at least composed of CECR2 and SMARCA1. Component of the CERF-5 ISWI chromatin remodeling complex at least composed of CECR2 and SMARCA5/SNF2H. LUZP1 is detected as part of the CERF-1 and CERF-5 complexes in embryonic stem (ES) cells where it is involved in complex stabilization but is not detected in the complexes in the testis. Interacts (via C-terminus) with LIMA1/EPLIN; both proteins restrict ciliation and may work together to regulate this process. Interacts with myosin light chain MYL9; the interaction results in inhibition of phosphorylation of MYL9 by DAPK3. Interacts with DAPK3; the interaction is likely to occur throughout the cell cycle and reduces the LUZP1-mediated suppression of MYL9 phosphorylation. Interacts with the chromosomal passenger complex (CPC); CPC kinase activity is required for localization of LUZP1 to the centromere. As to expression, expressed in cerebral cortex, cerebellum, hippocampus and brain stem.

It localises to the cytoplasm. Its subcellular location is the cytoskeleton. It is found in the microtubule organizing center. The protein localises to the centrosome. The protein resides in the cilium basal body. It localises to the midbody. Its subcellular location is the chromosome. It is found in the centromere. The protein localises to the spindle. The protein resides in the stress fiber. It localises to the nucleus. Its subcellular location is the cell projection. It is found in the dendrite. The protein localises to the perikaryon. The protein resides in the cell junction. It localises to the tight junction. Its function is as follows. F-actin cross-linking protein. Stabilizes actin and acts as a negative regulator of primary cilium formation. Positively regulates the phosphorylation of both myosin II and protein phosphatase 1 regulatory subunit PPP1R12A/MYPT1 and promotes the assembly of myosin II stacks within actin stress fibers. Inhibits the phosphorylation of myosin light chain MYL9 by DAPK3 and suppresses the constriction velocity of the contractile ring during cytokinesis. Binds to microtubules and promotes epithelial cell apical constriction by up-regulating levels of diphosphorylated myosin light chain (MLC) through microtubule-dependent inhibition of MLC dephosphorylation by myosin phosphatase. Involved in regulation of cell migration, nuclear size and centriole number, probably through regulation of the actin cytoskeleton. Component of the CERF-1 and CERF-5 chromatin remodeling complexes in embryonic stem cells where it acts to stabilize the complexes. Plays a role in embryonic brain and cardiovascular development. The polypeptide is Leucine zipper protein 1 (Luzp1) (Rattus norvegicus (Rat)).